Here is a 299-residue protein sequence, read N- to C-terminus: MITFLYIFFSILIMVLFVLGNFANGFIALVNFIDWVKRKKISSADQILTALAVSRIGLLWALLLNWYLTVLNPAFYSVELRITSYNAWVVTNHFSMWLAANLSIFYLLKIANFSNLLFLHLKRRVRSVILVILLGTLIFLVCHLLVANMDESMWAEEYEGNMTGKMKLRNTVHLSYLTVTTLWSFIPFTLSLISFLMLICSLCKHLKKMQLHGEGSQDLSTKVHIKALQTLISFLLLCAIFFLFLIVSVWSPRRLRNDPVVMVSKAVGNIYLAFDSFILIWRTKKLKHTFLLILCQIRC.

A topological domain (extracellular) is located at residue M1. A helical transmembrane segment spans residues 2–22 (ITFLYIFFSILIMVLFVLGNF). Residues 23–55 (ANGFIALVNFIDWVKRKKISSADQILTALAVSR) lie on the Cytoplasmic side of the membrane. Residues 56-76 (IGLLWALLLNWYLTVLNPAFY) traverse the membrane as a helical segment. Residues 77-87 (SVELRITSYNA) are Extracellular-facing. Residues 88–108 (WVVTNHFSMWLAANLSIFYLL) traverse the membrane as a helical segment. Residues 109–126 (KIANFSNLLFLHLKRRVR) lie on the Cytoplasmic side of the membrane. The helical transmembrane segment at 127-147 (SVILVILLGTLIFLVCHLLVA) threads the bilayer. Topologically, residues 148–181 (NMDESMWAEEYEGNMTGKMKLRNTVHLSYLTVTT) are extracellular. The N-linked (GlcNAc...) asparagine glycan is linked to N161. Residues 182–202 (LWSFIPFTLSLISFLMLICSL) form a helical membrane-spanning segment. Residues 203-229 (CKHLKKMQLHGEGSQDLSTKVHIKALQ) lie on the Cytoplasmic side of the membrane. The helical transmembrane segment at 230–250 (TLISFLLLCAIFFLFLIVSVW) threads the bilayer. The Extracellular segment spans residues 251–259 (SPRRLRNDP). Residues 260–280 (VVMVSKAVGNIYLAFDSFILI) form a helical membrane-spanning segment. Residues 281-299 (WRTKKLKHTFLLILCQIRC) lie on the Cytoplasmic side of the membrane.

This sequence belongs to the G-protein coupled receptor T2R family. In terms of tissue distribution, expressed in subsets of taste receptor cells of the tongue and exclusively in gustducin-positive cells.

The protein localises to the membrane. Functionally, receptor that may play a role in the perception of bitterness and is gustducin-linked. May play a role in sensing the chemical composition of the gastrointestinal content. The activity of this receptor may stimulate alpha gustducin, mediate PLC-beta-2 activation and lead to the gating of TRPM5. This is Taste receptor type 2 member 50 (TAS2R50) from Homo sapiens (Human).